The chain runs to 380 residues: Cytochrome b (380 aa).

4 helical membrane passes run 33–53 (FGSL…FLAM), 77–98 (WLIR…YLHV), 113–133 (WNIG…GYVL), and 178–198 (FFAF…IHLL). 2 residues coordinate heme b: histidine 83 and histidine 97. Heme b-binding residues include histidine 182 and histidine 196. Residue histidine 201 coordinates a ubiquinone. The next 4 helical transmembrane spans lie at 226 to 246 (YKDL…ALFS), 288 to 308 (LGGV…PMLH), 320 to 340 (LSQI…WIGG), and 347 to 367 (FVLI…IALP).

It belongs to the cytochrome b family. As to quaternary structure, the cytochrome bc1 complex contains 3 respiratory subunits (MT-CYB, CYC1 and UQCRFS1), 2 core proteins (UQCRC1 and UQCRC2) and probably 6 low-molecular weight proteins. Heme b serves as cofactor.

The protein resides in the mitochondrion inner membrane. In terms of biological role, component of the ubiquinol-cytochrome c reductase complex (complex III or cytochrome b-c1 complex) that is part of the mitochondrial respiratory chain. The b-c1 complex mediates electron transfer from ubiquinol to cytochrome c. Contributes to the generation of a proton gradient across the mitochondrial membrane that is then used for ATP synthesis. This is Cytochrome b (mt-cyb) from Acipenser persicus (Persian sturgeon).